Here is a 259-residue protein sequence, read N- to C-terminus: uncharacterized protein (259 aa).

Transmembrane regions (helical) follow at residues 55–75, 85–105, and 127–147; these read ILIL…SYLI, FPSI…FFSS, and FFFA…LCCG.

It localises to the membrane. This is an uncharacterized protein from Arabidopsis thaliana (Mouse-ear cress).